Consider the following 701-residue polypeptide: Elongation factor G 2 (701 aa).

The tr-type G domain maps to 8-291; it reads ERYRNIGISA…AVIDYLPSPA (284 aa). GTP-binding positions include 17–24, 88–92, and 142–145; these read AHIDAGKT, DTPGH, and NKMD.

This sequence belongs to the TRAFAC class translation factor GTPase superfamily. Classic translation factor GTPase family. EF-G/EF-2 subfamily.

The protein localises to the cytoplasm. In terms of biological role, catalyzes the GTP-dependent ribosomal translocation step during translation elongation. During this step, the ribosome changes from the pre-translocational (PRE) to the post-translocational (POST) state as the newly formed A-site-bound peptidyl-tRNA and P-site-bound deacylated tRNA move to the P and E sites, respectively. Catalyzes the coordinated movement of the two tRNA molecules, the mRNA and conformational changes in the ribosome. The polypeptide is Elongation factor G 2 (Burkholderia lata (strain ATCC 17760 / DSM 23089 / LMG 22485 / NCIMB 9086 / R18194 / 383)).